The following is a 141-amino-acid chain: Deoxyuridine 5'-triphosphate nucleotidohydrolase (141 aa).

This sequence belongs to the dUTPase family. Mg(2+) serves as cofactor.

The enzyme catalyses dUTP + H2O = dUMP + diphosphate + H(+). It participates in pyrimidine metabolism; dUMP biosynthesis; dUMP from dCTP (dUTP route): step 2/2. This enzyme is involved in nucleotide metabolism: it produces dUMP, the immediate precursor of thymidine nucleotides and it decreases the intracellular concentration of dUTP so that uracil cannot be incorporated into DNA. The polypeptide is Deoxyuridine 5'-triphosphate nucleotidohydrolase (Chlorella (PBCV-1)).